The sequence spans 314 residues: Methionyl-tRNA formyltransferase (314 aa).

113-116 (SLLP) contributes to the (6S)-5,6,7,8-tetrahydrofolate binding site.

Belongs to the Fmt family.

The catalysed reaction is L-methionyl-tRNA(fMet) + (6R)-10-formyltetrahydrofolate = N-formyl-L-methionyl-tRNA(fMet) + (6S)-5,6,7,8-tetrahydrofolate + H(+). Functionally, attaches a formyl group to the free amino group of methionyl-tRNA(fMet). The formyl group appears to play a dual role in the initiator identity of N-formylmethionyl-tRNA by promoting its recognition by IF2 and preventing the misappropriation of this tRNA by the elongation apparatus. The polypeptide is Methionyl-tRNA formyltransferase (Stutzerimonas stutzeri (strain A1501) (Pseudomonas stutzeri)).